The sequence spans 174 residues: uncharacterized protein (174 aa).

A helical transmembrane segment spans residues 126–146 (AIDEFIITVIPVVLGSGIPLF).

This sequence to B.subtilis YyaP.

The protein resides in the membrane. This is an uncharacterized protein from Bacillus subtilis (strain 168).